The chain runs to 382 residues: Mannitol-1-phosphate 5-dehydrogenase (382 aa).

3 to 14 is an NAD(+) binding site; that stretch reads ALHFGAGNIGRG. At K269 the chain carries N6-acetyllysine.

This sequence belongs to the mannitol dehydrogenase family. In terms of assembly, monomer.

The enzyme catalyses D-mannitol 1-phosphate + NAD(+) = beta-D-fructose 6-phosphate + NADH + H(+). This chain is Mannitol-1-phosphate 5-dehydrogenase, found in Escherichia coli O157:H7.